The primary structure comprises 623 residues: DNA-directed RNA polymerase subunit beta' (623 aa).

Residues C70, C72, C85, and C88 each contribute to the Zn(2+) site. Positions 466, 468, and 470 each coordinate Mg(2+).

The protein belongs to the RNA polymerase beta' chain family. RpoC1 subfamily. In terms of assembly, in plastids the minimal PEP RNA polymerase catalytic core is composed of four subunits: alpha, beta, beta', and beta''. When a (nuclear-encoded) sigma factor is associated with the core the holoenzyme is formed, which can initiate transcription. The cofactor is Mg(2+). Zn(2+) is required as a cofactor.

The protein resides in the plastid. It is found in the chloroplast. The catalysed reaction is RNA(n) + a ribonucleoside 5'-triphosphate = RNA(n+1) + diphosphate. Functionally, DNA-dependent RNA polymerase catalyzes the transcription of DNA into RNA using the four ribonucleoside triphosphates as substrates. The sequence is that of DNA-directed RNA polymerase subunit beta' from Guillardia theta (Cryptophyte).